The chain runs to 473 residues: Lysophospholipid acyltransferase 5 (473 aa).

The next 4 membrane-spanning stretches (helical) occupy residues 20-40 (LLIS…FFYN), 43-63 (AQHQ…FNCG), 66-86 (VIHP…MAGT), and 88-108 (ASIY…YWFH). Catalysis depends on residues asparagine 315 and histidine 351. A run of 3 helical transmembrane segments spans residues 341-361 (VITL…FLLF), 396-416 (FIWI…FLMF), and 431-451 (LYFI…MVLL). The Di-lysine motif motif lies at 470 to 473 (KKEL).

Belongs to the membrane-bound acyltransferase family.

It is found in the endoplasmic reticulum membrane. The enzyme catalyses a 1-acyl-sn-glycero-3-phosphocholine + an acyl-CoA = a 1,2-diacyl-sn-glycero-3-phosphocholine + CoA. It carries out the reaction a 1-acyl-sn-glycero-3-phospho-L-serine + an acyl-CoA = a 1,2-diacyl-sn-glycero-3-phospho-L-serine + CoA. It catalyses the reaction a 1-acyl-sn-glycero-3-phosphoethanolamine + an acyl-CoA = a 1,2-diacyl-sn-glycero-3-phosphoethanolamine + CoA. The protein operates within lipid metabolism; phospholipid metabolism. Probable acyltransferase which may mediate the conversion of lysophosphatidylcholine (1-acyl-sn-glycero-3-phosphocholine or LPC) into phosphatidylcholine (1,2-diacyl-sn-glycero-3-phosphocholine or PC) (LPCAT activity). May also catalyze the conversion of lysophosphatidylethanolamine (1-acyl-2-hydroxy-sn-glycero-3-phosphoethanolamine or LPE) into phosphatidylethanolamine (1,2-diacyl-sn-glycero-3-phosphoethanolamine or PE) (LPEAT activity), as well as the conversion of lysophosphatidylserine (1-acyl-2-hydroxy-sn-glycero-3-phospho-L-serine or LPS) into phosphatidylserine (1,2-diacyl-sn-glycero-3-phospho-L-serine or PS) (LPSAT activity). Required for incorporation of arachidonic acid into PC, PE, and PS. The protein is Lysophospholipid acyltransferase 5 (mboa-6) of Caenorhabditis elegans.